A 207-amino-acid polypeptide reads, in one-letter code: NADH-quinone oxidoreductase subunit C (207 aa).

It belongs to the complex I 30 kDa subunit family. In terms of assembly, NDH-1 is composed of 14 different subunits. Subunits NuoB, C, D, E, F, and G constitute the peripheral sector of the complex.

It localises to the cell inner membrane. The catalysed reaction is a quinone + NADH + 5 H(+)(in) = a quinol + NAD(+) + 4 H(+)(out). NDH-1 shuttles electrons from NADH, via FMN and iron-sulfur (Fe-S) centers, to quinones in the respiratory chain. The immediate electron acceptor for the enzyme in this species is believed to be ubiquinone. Couples the redox reaction to proton translocation (for every two electrons transferred, four hydrogen ions are translocated across the cytoplasmic membrane), and thus conserves the redox energy in a proton gradient. The sequence is that of NADH-quinone oxidoreductase subunit C from Rickettsia felis (strain ATCC VR-1525 / URRWXCal2) (Rickettsia azadi).